Reading from the N-terminus, the 207-residue chain is Large ribosomal subunit protein bL25 (207 aa).

Residues 186-207 are disordered; the sequence is SKPRGGAGAEGEADAEGEAAAE. The span at 196–207 shows a compositional bias: acidic residues; sequence GEADAEGEAAAE.

The protein belongs to the bacterial ribosomal protein bL25 family. CTC subfamily. Part of the 50S ribosomal subunit; part of the 5S rRNA/L5/L18/L25 subcomplex. Contacts the 5S rRNA. Binds to the 5S rRNA independently of L5 and L18.

Functionally, this is one of the proteins that binds to the 5S RNA in the ribosome where it forms part of the central protuberance. The polypeptide is Large ribosomal subunit protein bL25 (Methylobacillus flagellatus (strain ATCC 51484 / DSM 6875 / VKM B-1610 / KT)).